Here is a 227-residue protein sequence, read N- to C-terminus: Venom allergen 5 (227 aa).

Positions M1 to A21 are cleaved as a signal peptide. Disulfide bonds link C25-C37, C29-C125, C49-C117, and C193-C210. One can recognise an SCP domain in the interval E69 to Y212.

Belongs to the CRISP family. Venom allergen 5-like subfamily. As to expression, expressed by the venom gland.

It is found in the secreted. The sequence is that of Venom allergen 5 from Polistes dominula (European paper wasp).